Here is a 140-residue protein sequence, read N- to C-terminus: Holo-[acyl-carrier-protein] synthase (140 aa).

Mg(2+)-binding residues include D8 and E57.

Belongs to the P-Pant transferase superfamily. AcpS family. Requires Mg(2+) as cofactor.

The protein resides in the cytoplasm. It carries out the reaction apo-[ACP] + CoA = holo-[ACP] + adenosine 3',5'-bisphosphate + H(+). In terms of biological role, transfers the 4'-phosphopantetheine moiety from coenzyme A to a Ser of acyl-carrier-protein. This Beijerinckia indica subsp. indica (strain ATCC 9039 / DSM 1715 / NCIMB 8712) protein is Holo-[acyl-carrier-protein] synthase.